The following is a 104-amino-acid chain: Large ribosomal subunit protein uL24 (104 aa).

Belongs to the universal ribosomal protein uL24 family. In terms of assembly, part of the 50S ribosomal subunit.

Its function is as follows. One of two assembly initiator proteins, it binds directly to the 5'-end of the 23S rRNA, where it nucleates assembly of the 50S subunit. Functionally, one of the proteins that surrounds the polypeptide exit tunnel on the outside of the subunit. This Baumannia cicadellinicola subsp. Homalodisca coagulata protein is Large ribosomal subunit protein uL24.